The sequence spans 916 residues: MTDSNDDKTLSVTGKKTLTLKPSGMSQGTVRQDMGRGRTKAVVVETRKRRPMRPEDEKPITPATPAAPVRAAEPAPAPAQARPQQSTPAPRIHQPGGQANQRPQQSYQPPRANDRPRPVVLNHLSPEEMDARRRALAESQARDAQDAIRRAEEEKRRAAEEAVRKAAEAEEAARRAVEEAARQAEAAAAAAAEPAVTAPAPAPVTAEARPNTSPRPAAPAPAARRPDADGAAARPAPGAPAAVRGRRNDGDDDDRGASRGGPARGRVVRPEPAKPVTTRPKTDEERRRGKLTITTADVDGEDAGRSRSLSAMRRRQEKFRRSQVQETREKISREVVLPETITIQELSQRMSERAVDVIKYLMKEGQMMKPGDVIDADLAELIAGEFGHTVKRVSESDVELGIFNIADVEGDRVSRPPVVTIMGHVDHGKTSLLDAIRHANVVAGEAGGITQHIGAYQVEQNGQKITFIDTPGHAAFTAMRARGAQATDIAILVVAADDSVMPQTIESINHAKAAGVPIIVAINKIDKHEADPQKVRNQLLQHEVFVESMGGETLDVEVSAKTGKNLDKLLEAVLLQAEILDLKANPNRTAEGTVIEAQLDRGRGAVATVLVQNGTLKPGQIIVAGDVWGRVRALVNDKGEHMKEAPPAMPVEVLGLSGTPQAGDKFAVVESESRAREISEYRQRLARDKAAARQSGQRGSLEQMMTQMQSTGIKEFPLVIKGDVQGSIEAIAGALEKLGTDEVRARIVHLGAGGITESDISLAEASNAAIIGFNVRANAQARQFAERQGIEIRYYNIIYDLVDDVKAAMSGLLSPERRETFIGNAEILEVFNITKVGKVAGCRVVEGKVERGAGVRLIRNDVVVHEGKLKTLKRFKDEVSEVPMGQECGMAFENYEDMRVGDVIECFRVEHITRTL.

The tract at residues 1-325 is disordered; the sequence is MTDSNDDKTL…QEKFRRSQVQ (325 aa). Residues 60-91 are compositionally biased toward low complexity; it reads ITPATPAAPVRAAEPAPAPAQARPQQSTPAPR. Residues 97-108 are compositionally biased toward polar residues; sequence GQANQRPQQSYQ. A compositionally biased stretch (basic and acidic residues) spans 125–182; sequence SPEEMDARRRALAESQARDAQDAIRRAEEEKRRAAEEAVRKAAEAEEAARRAVEEAAR. 2 stretches are compositionally biased toward low complexity: residues 183 to 209 and 229 to 243; these read QAEAAAAAAAEPAVTAPAPAPVTAEAR and DGAAARPAPGAPAAV. The tr-type G domain occupies 414–581; sequence SRPPVVTIMG…AVLLQAEILD (168 aa). The segment at 423 to 430 is G1; the sequence is GHVDHGKT. 423-430 is a GTP binding site; that stretch reads GHVDHGKT. The G2 stretch occupies residues 448–452; the sequence is GITQH. The G3 stretch occupies residues 469–472; sequence DTPG. GTP contacts are provided by residues 469–473 and 523–526; these read DTPGH and NKID. The tract at residues 523-526 is G4; the sequence is NKID. The segment at 559–561 is G5; that stretch reads SAK.

It belongs to the TRAFAC class translation factor GTPase superfamily. Classic translation factor GTPase family. IF-2 subfamily.

It is found in the cytoplasm. One of the essential components for the initiation of protein synthesis. Protects formylmethionyl-tRNA from spontaneous hydrolysis and promotes its binding to the 30S ribosomal subunits. Also involved in the hydrolysis of GTP during the formation of the 70S ribosomal complex. The sequence is that of Translation initiation factor IF-2 from Rhizobium etli (strain ATCC 51251 / DSM 11541 / JCM 21823 / NBRC 15573 / CFN 42).